The sequence spans 550 residues: CTP synthase (550 aa).

Residues 1–277 (MNGSADAGPR…GRAVERALGL (277 aa)) form an amidoligase domain region. S23 lines the CTP pocket. Residue S23 coordinates UTP. 24-29 (SLGKGI) lines the ATP pocket. Residue Y64 participates in L-glutamine binding. Residue D81 participates in ATP binding. Residues D81 and E151 each contribute to the Mg(2+) site. CTP is bound by residues 158 to 160 (DIE), 198 to 203 (KTKPTQ), and K234. UTP-binding positions include 198–203 (KTKPTQ) and K234. A Glutamine amidotransferase type-1 domain is found at 302-549 (KIAIAGKYVK…VEAALAYQER (248 aa)). G364 contributes to the L-glutamine binding site. Catalysis depends on C391, which acts as the Nucleophile; for glutamine hydrolysis. L-glutamine is bound by residues 392–395 (LGLQ), E415, and R472. Catalysis depends on residues H522 and E524.

It belongs to the CTP synthase family. Homotetramer.

It carries out the reaction UTP + L-glutamine + ATP + H2O = CTP + L-glutamate + ADP + phosphate + 2 H(+). The catalysed reaction is L-glutamine + H2O = L-glutamate + NH4(+). The enzyme catalyses UTP + NH4(+) + ATP = CTP + ADP + phosphate + 2 H(+). Its pathway is pyrimidine metabolism; CTP biosynthesis via de novo pathway; CTP from UDP: step 2/2. Allosterically activated by GTP, when glutamine is the substrate; GTP has no effect on the reaction when ammonia is the substrate. The allosteric effector GTP functions by stabilizing the protein conformation that binds the tetrahedral intermediate(s) formed during glutamine hydrolysis. Inhibited by the product CTP, via allosteric rather than competitive inhibition. Its function is as follows. Catalyzes the ATP-dependent amination of UTP to CTP with either L-glutamine or ammonia as the source of nitrogen. Regulates intracellular CTP levels through interactions with the four ribonucleotide triphosphates. The sequence is that of CTP synthase from Thermus thermophilus (strain ATCC BAA-163 / DSM 7039 / HB27).